Reading from the N-terminus, the 37-residue chain is MKVRASVKKMCDKCRVIRRHGRVMVICSTPKHKQRQG.

The protein belongs to the bacterial ribosomal protein bL36 family.

This is Large ribosomal subunit protein bL36 from Prochlorococcus marinus (strain MIT 9313).